The sequence spans 388 residues: Acyl-CoA dehydrogenase fadE12 (388 aa).

This sequence belongs to the acyl-CoA dehydrogenase family. FAD serves as cofactor.

The catalysed reaction is a 2,3-saturated acyl-CoA + A = a 2,3-dehydroacyl-CoA + AH2. This Mycobacterium tuberculosis (strain CDC 1551 / Oshkosh) protein is Acyl-CoA dehydrogenase fadE12 (fadE12).